The primary structure comprises 46 residues: Defensin Tk-AMP-D6 (46 aa).

Cystine bridges form between cysteine 3/cysteine 46, cysteine 14/cysteine 34, cysteine 20/cysteine 40, and cysteine 24/cysteine 42.

In terms of biological role, plant defense peptide. In Triticum kiharae (Wheat), this protein is Defensin Tk-AMP-D6.